We begin with the raw amino-acid sequence, 192 residues long: Probable Brix domain-containing ribosomal biogenesis protein (192 aa).

In terms of domain architecture, Brix spans Arg-2–Lys-191.

Functionally, probably involved in the biogenesis of the ribosome. In Methanopyrus kandleri (strain AV19 / DSM 6324 / JCM 9639 / NBRC 100938), this protein is Probable Brix domain-containing ribosomal biogenesis protein.